The chain runs to 430 residues: Adenylosuccinate synthetase (430 aa).

GTP contacts are provided by residues 12 to 18 (GDEGKGK) and 40 to 42 (GHT). D13 acts as the Proton acceptor in catalysis. 2 residues coordinate Mg(2+): D13 and G40. IMP contacts are provided by residues 13–16 (DEGK), 38–41 (NAGH), T129, R143, Q224, T239, and R303. H41 functions as the Proton donor in the catalytic mechanism. Position 299 to 305 (299 to 305 (TVSNRER)) interacts with substrate. GTP contacts are provided by residues R305, 331-333 (KLD), and 413-415 (STG).

It belongs to the adenylosuccinate synthetase family. Homodimer. Mg(2+) is required as a cofactor.

The protein resides in the cytoplasm. The catalysed reaction is IMP + L-aspartate + GTP = N(6)-(1,2-dicarboxyethyl)-AMP + GDP + phosphate + 2 H(+). Its pathway is purine metabolism; AMP biosynthesis via de novo pathway; AMP from IMP: step 1/2. Its function is as follows. Plays an important role in the de novo pathway of purine nucleotide biosynthesis. Catalyzes the first committed step in the biosynthesis of AMP from IMP. In Ehrlichia ruminantium (strain Gardel), this protein is Adenylosuccinate synthetase.